The chain runs to 105 residues: Nitrogen fixation nifHD2 region GlnB-like protein 1 (105 aa).

It belongs to the P(II) protein family.

Its function is as follows. Could be involved in the regulation of nitrogen fixation. This Methanosarcina barkeri protein is Nitrogen fixation nifHD2 region GlnB-like protein 1.